A 596-amino-acid chain; its full sequence is Elongation factor 4 (596 aa).

The tr-type G domain maps to 2 to 184 (KHIRNFSIIA…VIVDQIPPPE (183 aa)). GTP contacts are provided by residues 14-19 (DHGKST) and 131-134 (NKID).

The protein belongs to the TRAFAC class translation factor GTPase superfamily. Classic translation factor GTPase family. LepA subfamily.

It is found in the cell inner membrane. The enzyme catalyses GTP + H2O = GDP + phosphate + H(+). Functionally, required for accurate and efficient protein synthesis under certain stress conditions. May act as a fidelity factor of the translation reaction, by catalyzing a one-codon backward translocation of tRNAs on improperly translocated ribosomes. Back-translocation proceeds from a post-translocation (POST) complex to a pre-translocation (PRE) complex, thus giving elongation factor G a second chance to translocate the tRNAs correctly. Binds to ribosomes in a GTP-dependent manner. This is Elongation factor 4 from Shewanella sp. (strain ANA-3).